We begin with the raw amino-acid sequence, 294 residues long: Shikimate dehydrogenase (NADP(+)) (294 aa).

Shikimate is bound by residues 22 to 24 (SLS) and Ser-69. Lys-73 serves as the catalytic Proton acceptor. Shikimate contacts are provided by Asn-94 and Asp-111. NADP(+) contacts are provided by residues 135 to 139 (GAGGA) and Leu-236. Residue Tyr-238 coordinates shikimate. Gly-260 contributes to the NADP(+) binding site.

Belongs to the shikimate dehydrogenase family. As to quaternary structure, homodimer.

The catalysed reaction is shikimate + NADP(+) = 3-dehydroshikimate + NADPH + H(+). It participates in metabolic intermediate biosynthesis; chorismate biosynthesis; chorismate from D-erythrose 4-phosphate and phosphoenolpyruvate: step 4/7. Involved in the biosynthesis of the chorismate, which leads to the biosynthesis of aromatic amino acids. Catalyzes the reversible NADPH linked reduction of 3-dehydroshikimate (DHSA) to yield shikimate (SA). The protein is Shikimate dehydrogenase (NADP(+)) of Streptococcus equi subsp. zooepidemicus (strain H70).